A 155-amino-acid chain; its full sequence is Small ribosomal subunit protein uS7cz/uS7cy (155 aa).

This sequence belongs to the universal ribosomal protein uS7 family. In terms of assembly, part of the 30S ribosomal subunit.

It is found in the plastid. The protein localises to the chloroplast. Functionally, one of the primary rRNA binding proteins, it binds directly to 16S rRNA where it nucleates assembly of the head domain of the 30S subunit. This is Small ribosomal subunit protein uS7cz/uS7cy (rps7-A) from Calycanthus floridus var. glaucus (Eastern sweetshrub).